We begin with the raw amino-acid sequence, 320 residues long: Ferrochelatase (320 aa).

Positions 194 and 275 each coordinate Fe cation.

The protein belongs to the ferrochelatase family. In terms of assembly, monomer.

It localises to the cytoplasm. It carries out the reaction heme b + 2 H(+) = protoporphyrin IX + Fe(2+). It functions in the pathway porphyrin-containing compound metabolism; protoheme biosynthesis; protoheme from protoporphyrin-IX: step 1/1. Catalyzes the ferrous insertion into protoporphyrin IX. This chain is Ferrochelatase, found in Escherichia coli O139:H28 (strain E24377A / ETEC).